We begin with the raw amino-acid sequence, 94 residues long: Aspartyl/glutamyl-tRNA(Asn/Gln) amidotransferase subunit C (94 aa).

The protein belongs to the GatC family. As to quaternary structure, heterotrimer of A, B and C subunits.

It carries out the reaction L-glutamyl-tRNA(Gln) + L-glutamine + ATP + H2O = L-glutaminyl-tRNA(Gln) + L-glutamate + ADP + phosphate + H(+). The catalysed reaction is L-aspartyl-tRNA(Asn) + L-glutamine + ATP + H2O = L-asparaginyl-tRNA(Asn) + L-glutamate + ADP + phosphate + 2 H(+). In terms of biological role, allows the formation of correctly charged Asn-tRNA(Asn) or Gln-tRNA(Gln) through the transamidation of misacylated Asp-tRNA(Asn) or Glu-tRNA(Gln) in organisms which lack either or both of asparaginyl-tRNA or glutaminyl-tRNA synthetases. The reaction takes place in the presence of glutamine and ATP through an activated phospho-Asp-tRNA(Asn) or phospho-Glu-tRNA(Gln). This is Aspartyl/glutamyl-tRNA(Asn/Gln) amidotransferase subunit C from Desulfotalea psychrophila (strain LSv54 / DSM 12343).